A 123-amino-acid chain; its full sequence is Holo-[acyl-carrier-protein] synthase (123 aa).

The Mg(2+) site is built by D8 and E50.

Belongs to the P-Pant transferase superfamily. AcpS family. The cofactor is Mg(2+).

The protein resides in the cytoplasm. It carries out the reaction apo-[ACP] + CoA = holo-[ACP] + adenosine 3',5'-bisphosphate + H(+). Functionally, transfers the 4'-phosphopantetheine moiety from coenzyme A to a Ser of acyl-carrier-protein. The sequence is that of Holo-[acyl-carrier-protein] synthase from Kocuria rhizophila (strain ATCC 9341 / DSM 348 / NBRC 103217 / DC2201).